The following is a 105-amino-acid chain: ATP synthase F(0) complex subunit a (105 aa).

3 helical membrane passes run 14 to 34 (EGTP…SLFI), 47 to 67 (LTAG…LLPM), and 72 to 92 (AILT…VAMI).

It belongs to the ATPase A chain family. Component of the ATP synthase complex composed at least of ATP5F1A/subunit alpha, ATP5F1B/subunit beta, ATP5MC1/subunit c (homooctomer), MT-ATP6/subunit a, MT-ATP8/subunit 8, ATP5ME/subunit e, ATP5MF/subunit f, ATP5MG/subunit g, ATP5MK/subunit k, ATP5MJ/subunit j, ATP5F1C/subunit gamma, ATP5F1D/subunit delta, ATP5F1E/subunit epsilon, ATP5PF/subunit F6, ATP5PB/subunit b, ATP5PD/subunit d, ATP5PO/subunit OSCP. ATP synthase complex consists of a soluble F(1) head domain (subunits alpha(3) and beta(3)) - the catalytic core - and a membrane F(0) domain - the membrane proton channel (subunits c, a, 8, e, f, g, k and j). These two domains are linked by a central stalk (subunits gamma, delta, and epsilon) rotating inside the F1 region and a stationary peripheral stalk (subunits F6, b, d, and OSCP). Interacts with DNAJC30; interaction is direct.

It is found in the mitochondrion inner membrane. It carries out the reaction H(+)(in) = H(+)(out). Subunit a, of the mitochondrial membrane ATP synthase complex (F(1)F(0) ATP synthase or Complex V) that produces ATP from ADP in the presence of a proton gradient across the membrane which is generated by electron transport complexes of the respiratory chain. ATP synthase complex consist of a soluble F(1) head domain - the catalytic core - and a membrane F(1) domain - the membrane proton channel. These two domains are linked by a central stalk rotating inside the F(1) region and a stationary peripheral stalk. During catalysis, ATP synthesis in the catalytic domain of F(1) is coupled via a rotary mechanism of the central stalk subunits to proton translocation. With the subunit c (ATP5MC1), forms the proton-conducting channel in the F(0) domain, that contains two crucial half-channels (inlet and outlet) that facilitate proton movement from the mitochondrial intermembrane space (IMS) into the matrix. Protons are taken up via the inlet half-channel and released through the outlet half-channel, following a Grotthuss mechanism. This chain is ATP synthase F(0) complex subunit a, found in Salmo trutta (Brown trout).